Here is a 284-residue protein sequence, read N- to C-terminus: uncharacterized protein (284 aa).

The signal sequence occupies residues 1 to 23 (MKRGCAIAVMICGLITSVSAASA).

This sequence belongs to the surface antigen msp4 family.

This is an uncharacterized protein from Brucella melitensis biotype 1 (strain ATCC 23456 / CCUG 17765 / NCTC 10094 / 16M).